The sequence spans 156 residues: Acyl carrier protein, mitochondrial (156 aa).

A mitochondrion-targeting transit peptide spans 1-68 (MASRVLSAYV…GRVTQLCRQY (68 aa)). The Carrier domain maps to 77 to 152 (EGIQDRVLYV…EIVDYIADKK (76 aa)). An N6-acetyllysine modification is found at lysine 88. Serine 112 bears the O-(pantetheine 4'-phosphoryl)serine mark.

This sequence belongs to the acyl carrier protein (ACP) family. In terms of assembly, mammalian complex I is composed of 45 different subunits. Interacts with ETFRF1. Identified in a complex composed of MALSU1, MIEF1 upstream open reading frame protein and NDUFAB1; within the trimeric complex, MIEF1 upstream open reading frame protein functions as a bridging scaffold that interacts with MALSU1 on one side, and with NDUFAB1 on the other side. The complex interacts with the mitochondrial large ribosomal subunit. Interacts with alpha-1-microglobulin chain; this interaction is required for the maintenance of mitochondrial redox homeostasis. Component of the mitochondrial core iron-sulfur cluster (ISC) complex composed of NFS1, LYRM4, NDUFAB1, ISCU, FXN, and FDX2; this complex is a heterohexamer containing two copies of each monomer. Component of the cyteine desulfurase complex composed of NFS1, LYRM4 and NDUFAB1; this complex contributes to the stability and cysteine desulfurase activity of NFS1. Post-translationally, phosphopantetheinylation at Ser-112 is essential for interactions with LYR motif-containing proteins.

It is found in the mitochondrion. In terms of biological role, carrier of the growing fatty acid chain in fatty acid biosynthesis. Accessory and non-catalytic subunit of the mitochondrial membrane respiratory chain NADH dehydrogenase (Complex I), which functions in the transfer of electrons from NADH to the respiratory chain. Accessory protein, of the core iron-sulfur cluster (ISC) assembly complex, that regulates, in association with LYRM4, the stability and the cysteine desulfurase activity of NFS1 and participates in the [2Fe-2S] clusters assembly on the scaffolding protein ISCU. The core iron-sulfur cluster (ISC) assembly complex is involved in the de novo synthesis of a [2Fe-2S] cluster, the first step of the mitochondrial iron-sulfur protein biogenesis. This process is initiated by the cysteine desulfurase complex (NFS1:LYRM4:NDUFAB1) that produces persulfide which is delivered on the scaffold protein ISCU in a FXN-dependent manner. Then this complex is stabilized by FDX2 which provides reducing equivalents to accomplish the [2Fe-2S] cluster assembly. Finally, the [2Fe-2S] cluster is transferred from ISCU to chaperone proteins, including HSCB, HSPA9 and GLRX5. In Gorilla gorilla gorilla (Western lowland gorilla), this protein is Acyl carrier protein, mitochondrial.